The primary structure comprises 591 residues: L-fucose isomerase (591 aa).

Residues E337 and D361 each act as proton acceptor in the active site. E337, D361, and H528 together coordinate Mn(2+).

Belongs to the L-fucose isomerase family. In terms of assembly, homohexamer. It depends on Mn(2+) as a cofactor.

It is found in the cytoplasm. It carries out the reaction L-fucose = L-fuculose. It functions in the pathway carbohydrate degradation; L-fucose degradation; L-lactaldehyde and glycerone phosphate from L-fucose: step 1/3. Functionally, converts the aldose L-fucose into the corresponding ketose L-fuculose. The sequence is that of L-fucose isomerase from Shigella dysenteriae serotype 1 (strain Sd197).